The primary structure comprises 431 residues: ATP-dependent protease ATPase subunit HslU (431 aa).

Residues V18, 60-65 (GVGKTE), D244, E309, and R381 each bind ATP.

Belongs to the ClpX chaperone family. HslU subfamily. A double ring-shaped homohexamer of HslV is capped on each side by a ring-shaped HslU homohexamer. The assembly of the HslU/HslV complex is dependent on binding of ATP.

It is found in the cytoplasm. Functionally, ATPase subunit of a proteasome-like degradation complex; this subunit has chaperone activity. The binding of ATP and its subsequent hydrolysis by HslU are essential for unfolding of protein substrates subsequently hydrolyzed by HslV. HslU recognizes the N-terminal part of its protein substrates and unfolds these before they are guided to HslV for hydrolysis. The protein is ATP-dependent protease ATPase subunit HslU of Caulobacter sp. (strain K31).